Here is a 215-residue protein sequence, read N- to C-terminus: UPF0502 protein YceH (215 aa).

K80 bears the N6-acetyllysine mark.

Belongs to the UPF0502 family.

In Escherichia coli O45:K1 (strain S88 / ExPEC), this protein is UPF0502 protein YceH.